The primary structure comprises 147 residues: Hemoglobin subunit epsilon-2 (147 aa).

Residues H3–H147 enclose the Globin domain. Y64 and H93 together coordinate heme b.

This sequence belongs to the globin family. As to expression, red blood cells.

Hemoglobin epsilon chain is a beta-type chain found in early embryos. The protein is Hemoglobin subunit epsilon-2 (HBE2) of Bos taurus (Bovine).